The sequence spans 210 residues: Vacuolar protein sorting-associated protein 28 homolog 2 (210 aa).

A VPS28 N-terminal domain is found at 1–99 (MMEVKLWNDK…VTSGLPATVE (99 aa)). The VPS28 C-terminal domain occupies 109–205 (SNSASIVAEC…SSYNSFMAAL (97 aa)).

It belongs to the VPS28 family. As to quaternary structure, component of the endosomal sorting required for transport complex I (ESCRT-I), composed of ELC, VPS28 and VPS37. Interacts with ELC.

It is found in the endosome. Its function is as follows. Component of the ESCRT-I complex (endosomal sorting complex required for transport I), a regulator of vesicular trafficking process. Required for the sorting of endocytic ubiquitinated cargos into multivesicular bodies (MVBs). Mediates the association to the ESCRT-0 complex. The chain is Vacuolar protein sorting-associated protein 28 homolog 2 (VPS28-2) from Arabidopsis thaliana (Mouse-ear cress).